Reading from the N-terminus, the 204-residue chain is Acyl-homoserine-lactone synthase (204 aa).

It belongs to the autoinducer synthase family.

The catalysed reaction is a fatty acyl-[ACP] + S-adenosyl-L-methionine = an N-acyl-L-homoserine lactone + S-methyl-5'-thioadenosine + holo-[ACP] + H(+). Required for the synthesis of acyl-HSL autoinducers that bind to SolR. The chain is Acyl-homoserine-lactone synthase (solI) from Ralstonia solanacearum (Pseudomonas solanacearum).